The sequence spans 135 residues: Transcriptional regulator HosA (135 aa).

Residues 4 to 134 (RNKAFHQLRQ…FVQLVRKMMN (131 aa)) enclose the HTH marR-type domain. Residues 48–71 (QVALIEAAVSTKATLAEMLARMEN) constitute a DNA-binding region (H-T-H motif).

Involved in the temperature-dependent positive control of flagellum-driven swimming motility and cellular aggregation. Regulates fliC expression by directly interacting with fliC promoter. The polypeptide is Transcriptional regulator HosA (hosA) (Escherichia coli O157:H7).